The following is a 91-amino-acid chain: Large ribosomal subunit protein bL31 (91 aa).

Residues 62 to 91 are disordered; the sequence is RRKYSGTKPQQTAKGKKAAPKSTPKTNKKG.

The protein belongs to the bacterial ribosomal protein bL31 family. Type A subfamily. As to quaternary structure, part of the 50S ribosomal subunit.

Functionally, binds the 23S rRNA. In Thermosynechococcus vestitus (strain NIES-2133 / IAM M-273 / BP-1), this protein is Large ribosomal subunit protein bL31.